The following is a 218-amino-acid chain: Small ribosomal subunit protein uS3 (218 aa).

The residue at position 1 (methionine 1) is an N-acetylmethionine. The KH type-2 domain occupies 23 to 95 (LNELFTREFN…TVVLFAEKIL (73 aa)).

Belongs to the universal ribosomal protein uS3 family.

This Dictyostelium discoideum (Social amoeba) protein is Small ribosomal subunit protein uS3 (rps3).